The following is a 337-amino-acid chain: Inositol 2-dehydrogenase (337 aa).

This sequence belongs to the Gfo/Idh/MocA family. In terms of assembly, homotetramer.

The catalysed reaction is myo-inositol + NAD(+) = scyllo-inosose + NADH + H(+). Its function is as follows. Involved in the oxidation of myo-inositol (MI) to 2-keto-myo-inositol (2KMI or 2-inosose). In Burkholderia ambifaria (strain MC40-6), this protein is Inositol 2-dehydrogenase.